The chain runs to 273 residues: Proteasome subunit beta type-10 (273 aa).

Met1 carries the N-acetylmethionine modification. A propeptide spans 1–39 (removed in mature form); it reads MLKQAVEHRGGFSFENCQRNASLEHVLPGLRVPLARKTG. The Nucleophile role is filled by Thr40. The residue at position 230 (Ser230) is a Phosphoserine.

It belongs to the peptidase T1B family. In terms of assembly, the 26S proteasome consists of a 20S proteasome core and two 19S regulatory subunits. The 20S proteasome core is composed of 28 subunits that are arranged in four stacked rings, resulting in a barrel-shaped structure. The two end rings are each formed by seven alpha subunits, and the two central rings are each formed by seven beta subunits. The catalytic chamber with the active sites is on the inside of the barrel. Component of the immunoproteasome, where it displaces the equivalent housekeeping subunit PSMB7. Component of the spermatoproteasome, a form of the proteasome specifically found in testis. Post-translationally, autocleaved. The resulting N-terminal Thr residue of the mature subunit is responsible for the nucleophile proteolytic activity.

The protein resides in the cytoplasm. Its subcellular location is the nucleus. The catalysed reaction is Cleavage of peptide bonds with very broad specificity.. Its function is as follows. The proteasome is a multicatalytic proteinase complex which is characterized by its ability to cleave peptides with Arg, Phe, Tyr, Leu, and Glu adjacent to the leaving group at neutral or slightly basic pH. The proteasome has an ATP-dependent proteolytic activity. This subunit is involved in antigen processing to generate class I binding peptides. This chain is Proteasome subunit beta type-10 (Psmb10), found in Rattus norvegicus (Rat).